The primary structure comprises 456 residues: Choline kinase (456 aa).

Belongs to the choline/ethanolamine kinase family. As to quaternary structure, monomer. Mg(2+) serves as cofactor.

It is found in the cytoplasm. The protein localises to the nucleus. It catalyses the reaction choline + ATP = phosphocholine + ADP + H(+). It participates in phospholipid metabolism; phosphatidylcholine biosynthesis; phosphocholine from choline: step 1/1. In terms of biological role, catalyzes the committed step in the synthesis of phosphatidylcholine by the CDP-choline pathway. The chain is Choline kinase from Schizosaccharomyces pombe (strain 972 / ATCC 24843) (Fission yeast).